The chain runs to 37 residues: Large ribosomal subunit protein bL36c (37 aa).

It belongs to the bacterial ribosomal protein bL36 family.

The protein localises to the plastid. It localises to the chloroplast. This chain is Large ribosomal subunit protein bL36c, found in Psilotum nudum (Whisk fern).